The sequence spans 407 residues: Cation efflux system protein CusB (407 aa).

Residues methionine 1–alanine 28 form the signal peptide.

Belongs to the membrane fusion protein (MFP) (TC 8.A.1) family. The cus efflux system is composed of CusA, CusB, CusC and CusF.

In terms of biological role, part of a cation efflux system that mediates resistance to copper and silver. The protein is Cation efflux system protein CusB (cusB) of Escherichia coli (strain K12).